The chain runs to 382 residues: Gap junction alpha-1 protein (382 aa).

Residues 2 to 23 lie on the Cytoplasmic side of the membrane; sequence GGWSALAKLLGKVQAYSPAGGK. At Ser-5 the chain carries Phosphoserine. A helical membrane pass occupies residues 24-44; it reads VWLSVLFIFRILLLGTAVESA. The Extracellular segment spans residues 45–76; that stretch reads WGDEQSAFRCNTQQPGCENVCYDKSFPISHVR. Disulfide bonds link Cys-54–Cys-192 and Cys-187–Cys-198. A helical membrane pass occupies residues 77-97; sequence FWVLQIIFVSVPTLLYLAHVF. The Cytoplasmic segment spans residues 98 to 155; that stretch reads YVMRKEEKLNKKEEELKVAQTDGANVDMHLKQIEIKKFKYGIEEHGKVKMRGGLLRTY. Residue Lys-144 forms a Glycyl lysine isopeptide (Lys-Gly) (interchain with G-Cter in SUMO) linkage. A helical membrane pass occupies residues 156 to 176; sequence IISILFKSVFEVAFLLIQWYI. Residues 177–207 lie on the Extracellular side of the membrane; that stretch reads YGFSLSAVYTCKREPCPHQVDCFLSRPTEKT. The helical transmembrane segment at 208–228 threads the bilayer; sequence IFIIFMLVVSLVSLALNIIEL. Residues 229–382 are Cytoplasmic-facing; the sequence is FYVFFKGVKD…SRPRPDDLEI (154 aa). Residue Lys-237 forms a Glycyl lysine isopeptide (Lys-Gly) (interchain with G-Cter in SUMO) linkage. An interaction with NOV region spans residues 244–382; it reads SDPYHATTGP…SRPRPDDLEI (139 aa). Residue Tyr-247 is modified to Phosphotyrosine. Ser-255, Ser-257, and Ser-262 each carry phosphoserine. The tract at residues 264–382 is interaction with UBQLN4; it reads EYAYFNGCSS…SRPRPDDLEI (119 aa). Cys-271 bears the S-nitrosocysteine mark. Residue Thr-275 is modified to Phosphothreonine. 2 positions are modified to phosphoserine: Ser-306 and Ser-314. Polar residues predominate over residues 317–332; sequence QNRMGQAGSTISNSHA. Residues 317–382 form a disordered region; it reads QNRMGQAGST…SRPRPDDLEI (66 aa). The residue at position 325 (Ser-325) is a Phosphoserine; by CK1. Thr-326 carries the post-translational modification Phosphothreonine. 2 positions are modified to phosphoserine; by CK1: Ser-328 and Ser-330. A phosphoserine mark is found at Ser-344 and Ser-365. Low complexity predominate over residues 362 to 374; that stretch reads RPSSRASSRASSR. The residue at position 368 (Ser-368) is a Phosphoserine; by PKC/PRKCG and PKC/PRKCD. A phosphoserine mark is found at Ser-369 and Ser-373.

The protein belongs to the connexin family. Alpha-type (group II) subfamily. As to quaternary structure, a connexon is composed of a hexamer of connexins. Interacts with SGSM3. Interacts with RIC1/CIP150. Interacts with CNST and CSNK1D. Interacts (via C-terminus) with TJP1. Interacts (via C-terminus) with SRC (via SH3 domain). Interacts (not ubiquitinated) with UBQLN4 (via UBA domain). Interacts with NOV. Interacts with TMEM65. Interacts with ANK3/ANKG and PKP2. Phosphorylation at Ser-325, Ser-328 and Ser-330 by CK1 modulates gap junction assembly. Phosphorylated at Ser-368 by PRKCG; phosphorylation induces disassembly of gap junction plaques and inhibition of gap junction activity. Phosphorylation at Ser-368 by PRKCD triggers its internalization into small vesicles leading to proteasome-mediated degradation. In terms of processing, sumoylated with SUMO1, SUMO2 and SUMO3, which may regulate the level of functional Cx43 gap junctions at the plasma membrane. May be desumoylated by SENP1 or SENP2. Post-translationally, S-nitrosylation at Cys-271 is enriched at the muscle endothelial gap junction in arteries, it augments channel permeability and may regulate of smooth muscle cell to endothelial cell communication. Acetylated in the developing cortex; leading to delocalization from the cell membrane.

Its subcellular location is the cell membrane. The protein localises to the cell junction. It is found in the gap junction. The protein resides in the endoplasmic reticulum. Its function is as follows. Gap junction protein that acts as a regulator of bladder capacity. A gap junction consists of a cluster of closely packed pairs of transmembrane channels, the connexons, through which materials of low MW diffuse from one cell to a neighboring cell. May play a critical role in the physiology of hearing by participating in the recycling of potassium to the cochlear endolymph. Negative regulator of bladder functional capacity: acts by enhancing intercellular electrical and chemical transmission, thus sensitizing bladder muscles to cholinergic neural stimuli and causing them to contract. May play a role in cell growth inhibition through the regulation of NOV expression and localization. Plays an essential role in gap junction communication in the ventricles. This chain is Gap junction alpha-1 protein (GJA1), found in Canis lupus familiaris (Dog).